Here is a 406-residue protein sequence, read N- to C-terminus: Tryptophan synthase beta chain (406 aa).

At lysine 99 the chain carries N6-(pyridoxal phosphate)lysine.

The protein belongs to the TrpB family. As to quaternary structure, tetramer of two alpha and two beta chains. Pyridoxal 5'-phosphate serves as cofactor.

The catalysed reaction is (1S,2R)-1-C-(indol-3-yl)glycerol 3-phosphate + L-serine = D-glyceraldehyde 3-phosphate + L-tryptophan + H2O. It functions in the pathway amino-acid biosynthesis; L-tryptophan biosynthesis; L-tryptophan from chorismate: step 5/5. Its function is as follows. The beta subunit is responsible for the synthesis of L-tryptophan from indole and L-serine. The chain is Tryptophan synthase beta chain from Brucella melitensis biotype 2 (strain ATCC 23457).